The chain runs to 500 residues: L-arabinose isomerase (500 aa).

The Mn(2+) site is built by E306, E333, H349, and H448.

It belongs to the arabinose isomerase family. Mn(2+) serves as cofactor.

It catalyses the reaction beta-L-arabinopyranose = L-ribulose. Its pathway is carbohydrate degradation; L-arabinose degradation via L-ribulose; D-xylulose 5-phosphate from L-arabinose (bacterial route): step 1/3. In terms of biological role, catalyzes the conversion of L-arabinose to L-ribulose. This is L-arabinose isomerase from Shewanella sp. (strain MR-4).